The primary structure comprises 326 residues: ATP synthase gamma chain (326 aa).

The protein belongs to the ATPase gamma chain family. F-type ATPases have 2 components, CF(1) - the catalytic core - and CF(0) - the membrane proton channel. CF(1) has five subunits: alpha(3), beta(3), gamma(1), delta(1), epsilon(1). CF(0) has three main subunits: a, b and c.

It is found in the cell membrane. Functionally, produces ATP from ADP in the presence of a proton gradient across the membrane. The gamma chain is believed to be important in regulating ATPase activity and the flow of protons through the CF(0) complex. The polypeptide is ATP synthase gamma chain (Corynebacterium efficiens (strain DSM 44549 / YS-314 / AJ 12310 / JCM 11189 / NBRC 100395)).